A 346-amino-acid polypeptide reads, in one-letter code: Methionine import ATP-binding protein MetN 1 (346 aa).

The ABC transporter domain maps to 2–241 (IELKNVSKVF…PQHVTTKKFV (240 aa)). 38–45 (GYSGAGKS) provides a ligand contact to ATP.

It belongs to the ABC transporter superfamily. Methionine importer (TC 3.A.1.24) family. The complex is composed of two ATP-binding proteins (MetN), two transmembrane proteins (MetI) and a solute-binding protein (MetQ).

The protein resides in the cell membrane. The enzyme catalyses L-methionine(out) + ATP + H2O = L-methionine(in) + ADP + phosphate + H(+). It catalyses the reaction D-methionine(out) + ATP + H2O = D-methionine(in) + ADP + phosphate + H(+). In terms of biological role, part of the ABC transporter complex MetNIQ involved in methionine import. Responsible for energy coupling to the transport system. The sequence is that of Methionine import ATP-binding protein MetN 1 from Bacillus cereus (strain ATCC 10987 / NRS 248).